The following is a 653-amino-acid chain: Phospholipid-transporting ATPase VD (653 aa).

At 1 to 375 the chain is on the cytoplasmic side; that stretch reads MACNLCYEAE…GHWCYTRLSN (375 aa). Residues E14, F56, K80, R124, T204, G205, D206, 259–266, R293, and K299 contribute to the ATP site; that span reads GLIITGKT. D319 lines the Mg(2+) pocket. The ATP site is built by N322 and D323. D323 serves as a coordination point for Mg(2+). A helical membrane pass occupies residues 376–396; it reads MILYFFYKNVAYVNLLFWYQF. Topologically, residues 397-407 are exoplasmic loop; that stretch reads FCGFSGTSMTD. A helical transmembrane segment spans residues 408–428; it reads YWVLIFFNLLFTSAPPVIYGV. Over 429 to 458 the chain is Cytoplasmic; sequence LEKDVSAETLMQLPELYKSGQKSEAYLPHT. Residues 459-480 traverse the membrane as a helical segment; the sequence is FWITLLDAFYQSLVCFFVPYFT. Topologically, residues 481–487 are exoplasmic loop; it reads YQGSDID. The helical transmembrane segment at 488–510 threads the bilayer; it reads IFAFGNPLNTAALFIILLHLIIE. Residues 511 to 516 lie on the Cytoplasmic side of the membrane; that stretch reads SKSLTW. A helical transmembrane segment spans residues 517–537; that stretch reads IHMLVITGSILSYFLFAIVFG. The Exoplasmic loop portion of the chain corresponds to 538–555; the sequence is AMCVTCNPPSNPYWIMQE. Residues 556 to 580 traverse the membrane as a helical segment; sequence HVLDPVFYLVCILTTCIALLPRFVY. Residues 581 to 653 lie on the Cytoplasmic side of the membrane; that stretch reads RGAGKMNQVT…AFEMARPCKD (73 aa).

Belongs to the cation transport ATPase (P-type) (TC 3.A.3) family. Type IV subfamily. As to quaternary structure, component of a P4-ATPase flippase complex which consists of a catalytic alpha subunit ATP10A and an accessory beta subunit TMEM30A. Requires Mg(2+) as cofactor. Post-translationally, autophosphorylated at the conserved aspartate of the P-type ATPase signature sequence.

The protein resides in the cell membrane. The protein localises to the endoplasmic reticulum membrane. The enzyme catalyses ATP + H2O + phospholipidSide 1 = ADP + phosphate + phospholipidSide 2.. It carries out the reaction a beta-D-glucosyl-(1&lt;-&gt;1')-N-acylsphing-4-enine(out) + ATP + H2O = a beta-D-glucosyl-(1&lt;-&gt;1')-N-acylsphing-4-enine(in) + ADP + phosphate + H(+). Its function is as follows. Catalytic component of a P4-ATPase flippase complex, which catalyzes the hydrolysis of ATP coupled to the transport of glucosylceramide (GlcCer) from the outer to the inner leaflet of the plasma membrane. In Macaca fascicularis (Crab-eating macaque), this protein is Phospholipid-transporting ATPase VD (ATP10D).